The chain runs to 519 residues: Exodeoxyribonuclease 7 large subunit (519 aa).

Residues valine 500–leucine 519 are disordered.

This sequence belongs to the XseA family. Heterooligomer composed of large and small subunits.

The protein localises to the cytoplasm. It catalyses the reaction Exonucleolytic cleavage in either 5'- to 3'- or 3'- to 5'-direction to yield nucleoside 5'-phosphates.. Functionally, bidirectionally degrades single-stranded DNA into large acid-insoluble oligonucleotides, which are then degraded further into small acid-soluble oligonucleotides. In Cereibacter sphaeroides (strain KD131 / KCTC 12085) (Rhodobacter sphaeroides), this protein is Exodeoxyribonuclease 7 large subunit.